The sequence spans 774 residues: Lysyl oxidase homolog 2 (774 aa).

Residues 1-25 (MERPLCSHLCSCLAMLALLSPLSLA) form the signal peptide. 4 SRCR domains span residues 58–159 (LRLA…VVCS), 188–302 (IRAI…VSCV), 326–425 (VRLR…VRCN), and 435–544 (LRLN…VACS). 9 disulfide bridges follow: Cys-84–Cys-148, Cys-97–Cys-158, Cys-128–Cys-138, Cys-218–Cys-291, Cys-231–Cys-301, Cys-265–Cys-275, Cys-351–Cys-414, Cys-364–Cys-424, and Cys-395–Cys-405. Asn-288 carries N-linked (GlcNAc...) asparagine glycosylation. An N-linked (GlcNAc...) (complex) asparagine glycan is attached at Asn-455. 3 disulfides stabilise this stretch: Cys-464–Cys-530, Cys-477–Cys-543, and Cys-511–Cys-521. Residues 548–751 (PDLVLNAEMV…WMYNCHIGGS (204 aa)) form a lysyl-oxidase like region. Positions 549 and 550 each coordinate Ca(2+). Disulfide bonds link Cys-573–Cys-625, Cys-579–Cys-695, Cys-657–Cys-673, and Cys-663–Cys-685. 3 residues coordinate Cu cation: His-626, His-628, and His-630. Asn-644 carries an N-linked (GlcNAc...) (complex) asparagine glycan. The segment at residues 653-689 (KASFCLEDTECEGDIQKNYECANFGDQGITMGCWDMY) is a cross-link (lysine tyrosylquinone (Lys-Tyr)). A 2',4',5'-topaquinone modification is found at Tyr-689. Ca(2+) is bound by residues Glu-722, Asp-724, Asn-727, and Asn-728. A disulfide bond links Cys-732 and Cys-746.

This sequence belongs to the lysyl oxidase family. As to quaternary structure, component of some chromatin repressor complex. Interacts with SNAI1. Interacts with TAF10. Interacts with HSPA5. Interacts with EFEMP2. It depends on Cu cation as a cofactor. Lysine tyrosylquinone residue is required as a cofactor. In terms of processing, the lysine tyrosylquinone cross-link (LTQ) is generated by condensation of the epsilon-amino group of a lysine with a topaquinone produced by oxidation of tyrosine. N-glycosylated. N-glycosylation on Asn-455 and Asn-644 may be essential for proper folding and secretion; may be composed of a fucosylated carbohydrates attached to a trimannose N-linked glycan core. As to expression, expressed in many tissues. Highest expression in reproductive tissues, placenta, uterus and prostate. In esophageal epithelium, expressed in the basal, prickle and granular cell layers. Up-regulated in a number of cancers cells and tissues.

It is found in the secreted. The protein localises to the extracellular space. It localises to the extracellular matrix. The protein resides in the basement membrane. Its subcellular location is the nucleus. It is found in the chromosome. The protein localises to the endoplasmic reticulum. It carries out the reaction L-lysyl-[protein] + O2 + H2O = (S)-2-amino-6-oxohexanoyl-[protein] + H2O2 + NH4(+). With respect to regulation, according to some reports, it is inhibited by beta-aminopropionitrile (BAPN). According to another report, it is not inhibited by beta-aminopropionitrile (BAPN). Specifically inhibited by a mouse monoclonal antibody AB0023, inhibition occurs in a non-competitive manner. Mediates the post-translational oxidative deamination of lysine residues on target proteins leading to the formation of deaminated lysine (allysine). Acts as a transcription corepressor and specifically mediates deamination of trimethylated 'Lys-4' of histone H3 (H3K4me3), a specific tag for epigenetic transcriptional activation. Shows no activity against histone H3 when it is trimethylated on 'Lys-9' (H3K9me3) or 'Lys-27' (H3K27me3) or when 'Lys-4' is monomethylated (H3K4me1) or dimethylated (H3K4me2). Also mediates deamination of methylated TAF10, a member of the transcription factor IID (TFIID) complex, which induces release of TAF10 from promoters, leading to inhibition of TFIID-dependent transcription. LOXL2-mediated deamination of TAF10 results in transcriptional repression of genes required for embryonic stem cell pluripotency including POU5F1/OCT4, NANOG, KLF4 and SOX2. Involved in epithelial to mesenchymal transition (EMT) via interaction with SNAI1 and participates in repression of E-cadherin CDH1, probably by mediating deamination of histone H3. During EMT, involved with SNAI1 in negatively regulating pericentromeric heterochromatin transcription. SNAI1 recruits LOXL2 to pericentromeric regions to oxidize histone H3 and repress transcription which leads to release of heterochromatin component CBX5/HP1A, enabling chromatin reorganization and acquisition of mesenchymal traits. Interacts with the endoplasmic reticulum protein HSPA5 which activates the IRE1-XBP1 pathway of the unfolded protein response, leading to expression of several transcription factors involved in EMT and subsequent EMT induction. Involved in E-cadherin repression following hypoxia, a hallmark of EMT believed to amplify tumor aggressiveness, suggesting that it may play a role in tumor progression. When secreted into the extracellular matrix, promotes cross-linking of extracellular matrix proteins by mediating oxidative deamination of peptidyl lysine residues in precursors to fibrous collagen and elastin. Acts as a regulator of sprouting angiogenesis, probably via collagen IV scaffolding. Acts as a regulator of chondrocyte differentiation, probably by regulating expression of factors that control chondrocyte differentiation. The polypeptide is Lysyl oxidase homolog 2 (LOXL2) (Homo sapiens (Human)).